The primary structure comprises 192 residues: Peptide deformylase (192 aa).

The Fe cation site is built by Cys102 and His145. Residue Glu146 is part of the active site. His149 lines the Fe cation pocket.

It belongs to the polypeptide deformylase family. Fe(2+) serves as cofactor.

It carries out the reaction N-terminal N-formyl-L-methionyl-[peptide] + H2O = N-terminal L-methionyl-[peptide] + formate. In terms of biological role, removes the formyl group from the N-terminal Met of newly synthesized proteins. Requires at least a dipeptide for an efficient rate of reaction. N-terminal L-methionine is a prerequisite for activity but the enzyme has broad specificity at other positions. This chain is Peptide deformylase, found in Thermus thermophilus (strain ATCC BAA-163 / DSM 7039 / HB27).